The following is a 45-amino-acid chain: Large ribosomal subunit protein bL34 (45 aa).

This sequence belongs to the bacterial ribosomal protein bL34 family.

This chain is Large ribosomal subunit protein bL34, found in Paenarthrobacter aurescens (strain TC1).